We begin with the raw amino-acid sequence, 269 residues long: Ubiquinone/menaquinone biosynthesis C-methyltransferase UbiE (269 aa).

Residues Thr-92, Asp-113, and 141–142 (NA) each bind S-adenosyl-L-methionine.

The protein belongs to the class I-like SAM-binding methyltransferase superfamily. MenG/UbiE family.

It carries out the reaction a 2-demethylmenaquinol + S-adenosyl-L-methionine = a menaquinol + S-adenosyl-L-homocysteine + H(+). It catalyses the reaction a 2-methoxy-6-(all-trans-polyprenyl)benzene-1,4-diol + S-adenosyl-L-methionine = a 5-methoxy-2-methyl-3-(all-trans-polyprenyl)benzene-1,4-diol + S-adenosyl-L-homocysteine + H(+). It participates in quinol/quinone metabolism; menaquinone biosynthesis; menaquinol from 1,4-dihydroxy-2-naphthoate: step 2/2. The protein operates within cofactor biosynthesis; ubiquinone biosynthesis. Functionally, methyltransferase required for the conversion of demethylmenaquinol (DMKH2) to menaquinol (MKH2) and the conversion of 2-polyprenyl-6-methoxy-1,4-benzoquinol (DDMQH2) to 2-polyprenyl-3-methyl-6-methoxy-1,4-benzoquinol (DMQH2). The polypeptide is Ubiquinone/menaquinone biosynthesis C-methyltransferase UbiE (Brucella melitensis biotype 2 (strain ATCC 23457)).